A 390-amino-acid chain; its full sequence is Multidrug export protein EmrA (390 aa).

Residues 1–24 are Cytoplasmic-facing; the sequence is MSANAETQTPQQPVKKSGKRKRLL. Residues 25–45 form a helical membrane-spanning segment; sequence LLLTLLFIIIAVAIGIYWFLV. At 46–390 the chain is on the periplasmic side; that stretch reads LRHFEETDDA…IDDIVKANAG (345 aa). Residues 120–180 adopt a coiled-coil conformation; that stretch reads INSKQLQANI…QAQLDVAIQQ (61 aa).

Belongs to the membrane fusion protein (MFP) (TC 8.A.1) family. Homodimer and homotrimer. Part of the tripartite efflux system EmrAB-TolC, which is composed of an inner membrane transporter, EmrB, a periplasmic membrane fusion protein, EmrA, and an outer membrane component, TolC. The complex forms a large protein conduit and can translocate molecules across both the inner and outer membranes. Interacts with EmrB. EmrAB complex forms a dimer in vitro.

It is found in the cell inner membrane. Its function is as follows. Part of the tripartite efflux system EmrAB-TolC, which confers resistance to antibiotics such as CCCP, FCCP, 2,4-dinitrophenol and nalidixic acid. EmrA is a drug-binding protein that provides a physical link between EmrB and TolC. This chain is Multidrug export protein EmrA (emrA), found in Escherichia coli (strain K12).